Consider the following 382-residue polypeptide: Adenosine 3'-phospho 5'-phosphosulfate transporter 2 (382 aa).

Residues 1 to 10 are compositionally biased toward polar residues; sequence MSVSNRNGNG. A disordered region spans residues 1–33; the sequence is MSVSNRNGNGSEVIYVGDRSTNRPPRNAPSPDE. 10 consecutive transmembrane segments (helical) span residues 56–76, 83–103, 121–141, 144–164, 170–190, 197–217, 234–254, 271–291, 299–319, and 323–343; these read LCCA…ELIF, PYGW…GYVE, VLLA…LGYL, PTQV…SILI, GPLD…FTLA, NFNP…AAIG, VVIY…LLTG, FGYA…VLTL, LAAT…FVFF, and FTIN…LNVY.

The protein belongs to the nucleotide-sugar transporter family. SLC35B subfamily.

It localises to the golgi apparatus membrane. Mediates the transport of adenosine 3'-phospho 5'-phosphosulfate (PAPS), from cytosol into Golgi. PAPS is a universal sulfuryl donor for sulfation events that take place in the Golgi. Essential for viability. Involved in glycosaminoglycan synthesis and the subsequent signaling. May be involved in hh and dpp signaling by controlling the sulfation of heparan sulfate (HS). The chain is Adenosine 3'-phospho 5'-phosphosulfate transporter 2 from Aedes aegypti (Yellowfever mosquito).